We begin with the raw amino-acid sequence, 549 residues long: Glucose-6-phosphate isomerase (549 aa).

The active-site Proton donor is Glu-353. Residues His-384 and Lys-512 contribute to the active site.

The protein belongs to the GPI family.

The protein localises to the cytoplasm. It carries out the reaction alpha-D-glucose 6-phosphate = beta-D-fructose 6-phosphate. It participates in carbohydrate biosynthesis; gluconeogenesis. The protein operates within carbohydrate degradation; glycolysis; D-glyceraldehyde 3-phosphate and glycerone phosphate from D-glucose: step 2/4. Catalyzes the reversible isomerization of glucose-6-phosphate to fructose-6-phosphate. The chain is Glucose-6-phosphate isomerase from Solidesulfovibrio magneticus (strain ATCC 700980 / DSM 13731 / RS-1) (Desulfovibrio magneticus).